Here is a 149-residue protein sequence, read N- to C-terminus: 3-dehydroquinate dehydratase (149 aa).

Tyr22 serves as the catalytic Proton acceptor. Residues Asn73, His79, and Asp86 each contribute to the substrate site. The active-site Proton donor is the His99. Residues 100–101 and Arg110 contribute to the substrate site; that span reads LS.

The protein belongs to the type-II 3-dehydroquinase family. As to quaternary structure, homododecamer.

It catalyses the reaction 3-dehydroquinate = 3-dehydroshikimate + H2O. The protein operates within metabolic intermediate biosynthesis; chorismate biosynthesis; chorismate from D-erythrose 4-phosphate and phosphoenolpyruvate: step 3/7. Catalyzes a trans-dehydration via an enolate intermediate. The polypeptide is 3-dehydroquinate dehydratase (Prochlorococcus marinus (strain MIT 9313)).